A 247-amino-acid chain; its full sequence is Carboxy-S-adenosyl-L-methionine synthase (247 aa).

S-adenosyl-L-methionine is bound by residues Y40, 65–67 (GAS), 90–91 (DN), 122–123 (DI), N137, and R204.

The protein belongs to the class I-like SAM-binding methyltransferase superfamily. Cx-SAM synthase family. As to quaternary structure, homodimer.

The enzyme catalyses prephenate + S-adenosyl-L-methionine = carboxy-S-adenosyl-L-methionine + 3-phenylpyruvate + H2O. Its function is as follows. Catalyzes the conversion of S-adenosyl-L-methionine (SAM) to carboxy-S-adenosyl-L-methionine (Cx-SAM). This is Carboxy-S-adenosyl-L-methionine synthase from Pseudomonas fluorescens (strain Pf0-1).